The chain runs to 448 residues: Phosphoglucosamine mutase (448 aa).

Serine 100 functions as the Phosphoserine intermediate in the catalytic mechanism. Serine 100, aspartate 240, aspartate 242, and aspartate 244 together coordinate Mg(2+). Residue serine 100 is modified to Phosphoserine.

It belongs to the phosphohexose mutase family. The cofactor is Mg(2+). Post-translationally, activated by phosphorylation.

It catalyses the reaction alpha-D-glucosamine 1-phosphate = D-glucosamine 6-phosphate. Catalyzes the conversion of glucosamine-6-phosphate to glucosamine-1-phosphate. The polypeptide is Phosphoglucosamine mutase (Clostridium tetani (strain Massachusetts / E88)).